We begin with the raw amino-acid sequence, 374 residues long: Beta sliding clamp (374 aa).

Belongs to the beta sliding clamp family. Forms a ring-shaped head-to-tail homodimer around DNA which binds and tethers DNA polymerases and other proteins to the DNA. The DNA replisome complex has a single clamp-loading complex (3 tau and 1 each of delta, delta', psi and chi subunits) which binds 3 Pol III cores (1 core on the leading strand and 2 on the lagging strand) each with a beta sliding clamp dimer. Additional proteins in the replisome are other copies of gamma, psi and chi, Ssb, DNA helicase and RNA primase.

The protein resides in the cytoplasm. Functionally, confers DNA tethering and processivity to DNA polymerases and other proteins. Acts as a clamp, forming a ring around DNA (a reaction catalyzed by the clamp-loading complex) which diffuses in an ATP-independent manner freely and bidirectionally along dsDNA. Initially characterized for its ability to contact the catalytic subunit of DNA polymerase III (Pol III), a complex, multichain enzyme responsible for most of the replicative synthesis in bacteria; Pol III exhibits 3'-5' exonuclease proofreading activity. The beta chain is required for initiation of replication as well as for processivity of DNA replication. This chain is Beta sliding clamp (dnaN), found in Helicobacter pylori (strain J99 / ATCC 700824) (Campylobacter pylori J99).